Reading from the N-terminus, the 265-residue chain is Cytochrome c oxidase subunit 3 (265 aa).

The next 6 helical transmembrane spans lie at 41-61 (GGAR…FVWW), 85-105 (GFIL…WAFF), 137-157 (TLIL…ILAG), 162-182 (AVYA…FQGM), 200-220 (FFLA…FLII), and 245-265 (WHFV…WGGI).

It belongs to the cytochrome c oxidase subunit 3 family. In terms of assembly, component of the cytochrome c oxidase (complex IV, CIV), a multisubunit enzyme composed of a catalytic core of 3 subunits and several supernumerary subunits. The complex exists as a monomer or a dimer and forms supercomplexes (SCs) in the inner mitochondrial membrane with ubiquinol-cytochrome c oxidoreductase (cytochrome b-c1 complex, complex III, CIII).

The protein resides in the mitochondrion inner membrane. The catalysed reaction is 4 Fe(II)-[cytochrome c] + O2 + 8 H(+)(in) = 4 Fe(III)-[cytochrome c] + 2 H2O + 4 H(+)(out). Its function is as follows. Component of the cytochrome c oxidase, the last enzyme in the mitochondrial electron transport chain which drives oxidative phosphorylation. The respiratory chain contains 3 multisubunit complexes succinate dehydrogenase (complex II, CII), ubiquinol-cytochrome c oxidoreductase (cytochrome b-c1 complex, complex III, CIII) and cytochrome c oxidase (complex IV, CIV), that cooperate to transfer electrons derived from NADH and succinate to molecular oxygen, creating an electrochemical gradient over the inner membrane that drives transmembrane transport and the ATP synthase. Cytochrome c oxidase is the component of the respiratory chain that catalyzes the reduction of oxygen to water. Electrons originating from reduced cytochrome c in the intermembrane space (IMS) are transferred via the dinuclear copper A center (CU(A)) of subunit 2 and heme A of subunit 1 to the active site in subunit 1, a binuclear center (BNC) formed by heme A3 and copper B (CU(B)). The BNC reduces molecular oxygen to 2 water molecules using 4 electrons from cytochrome c in the IMS and 4 protons from the mitochondrial matrix. This Arabidopsis thaliana (Mouse-ear cress) protein is Cytochrome c oxidase subunit 3 (COX3).